A 553-amino-acid polypeptide reads, in one-letter code: Probable malate:quinone oxidoreductase (553 aa).

The tract at residues 524 to 553 (PPPKIDVNTPSQATGTAPARPAKASADMAL) is disordered.

The protein belongs to the MQO family. It depends on FAD as a cofactor.

The catalysed reaction is (S)-malate + a quinone = a quinol + oxaloacetate. It participates in carbohydrate metabolism; tricarboxylic acid cycle; oxaloacetate from (S)-malate (quinone route): step 1/1. The sequence is that of Probable malate:quinone oxidoreductase from Burkholderia lata (strain ATCC 17760 / DSM 23089 / LMG 22485 / NCIMB 9086 / R18194 / 383).